The chain runs to 420 residues: Glucose-1-phosphate adenylyltransferase (420 aa).

Residues Tyr107, Gly172, 187 to 188 (EK), and Ser205 contribute to the alpha-D-glucose 1-phosphate site.

Belongs to the bacterial/plant glucose-1-phosphate adenylyltransferase family. As to quaternary structure, homotetramer.

It catalyses the reaction alpha-D-glucose 1-phosphate + ATP + H(+) = ADP-alpha-D-glucose + diphosphate. It participates in glycan biosynthesis; glycogen biosynthesis. Involved in the biosynthesis of ADP-glucose, a building block required for the elongation reactions to produce glycogen. Catalyzes the reaction between ATP and alpha-D-glucose 1-phosphate (G1P) to produce pyrophosphate and ADP-Glc. This chain is Glucose-1-phosphate adenylyltransferase, found in Rhizobium rhizogenes (strain K84 / ATCC BAA-868) (Agrobacterium radiobacter).